We begin with the raw amino-acid sequence, 222 residues long: RNA-binding protein KhpB (222 aa).

Residues 2–51 (DMVTVTAKTVEEAVTKALIELQTTSDKLTYEIVEKGSAGFLGIGSKPAII) form a jag_N domain region. Residues 54–133 (KRKETLQDKA…KSSSDYIRVK (80 aa)) enclose the KH domain. The R3H domain maps to 138 to 204 (NYRERRKETL…EEPFRHVIIS (67 aa)).

The protein belongs to the KhpB RNA-binding protein family. As to quaternary structure, forms a complex with KhpA. Homodimer or homotrimer.

The protein resides in the cytoplasm. Its function is as follows. A probable RNA chaperone. Forms a complex with KhpA which binds to cellular RNA and controls its expression. Plays a role in peptidoglycan (PG) homeostasis and cell length regulation. The protein is RNA-binding protein KhpB of Clostridium symbiosum (Bacteroides symbiosus).